An 84-amino-acid chain; its full sequence is Cell division topological specificity factor (84 aa).

This sequence belongs to the MinE family.

Prevents the cell division inhibition by proteins MinC and MinD at internal division sites while permitting inhibition at polar sites. This ensures cell division at the proper site by restricting the formation of a division septum at the midpoint of the long axis of the cell. The sequence is that of Cell division topological specificity factor from Hydrogenovibrio crunogenus (strain DSM 25203 / XCL-2) (Thiomicrospira crunogena).